We begin with the raw amino-acid sequence, 640 residues long: Zinc finger protein 549 (640 aa).

Positions 27–140 (VTFEDIAVYF…PYTSVASGKW (114 aa)) constitute a KRAB domain. The C2H2-type 1; degenerate zinc-finger motif lies at 217–241 (FQQRRYKCEQVFNEKVHVTEHQRVH). A Glycyl lysine isopeptide (Lys-Gly) (interchain with G-Cter in SUMO2) cross-link involves residue K223. The segment at 247–269 (YKRREYGKSLNSKYLFVEHQRTH) adopts a C2H2-type 2; degenerate zinc-finger fold. C2H2-type zinc fingers lie at residues 275–298 (YVCN…QRIH), 304–326 (YVCI…QRTH), 332–355 (YVCN…QRIH), 361–383 (YVCM…QRVH), 389–411 (YQCS…HRIH), 417–439 (YECK…QRIH), 445–467 (YVCI…QRIH), 473–495 (YECS…HKIH), 501–523 (YECS…QRIH), 529–551 (CECN…QKVH), 557–579 (CECS…QKVH), 585–607 (YNCT…QRIH), and 613–635 (YECG…QKVH).

This sequence belongs to the krueppel C2H2-type zinc-finger protein family.

Its subcellular location is the nucleus. In terms of biological role, may be involved in transcriptional regulation. This chain is Zinc finger protein 549 (ZNF549), found in Homo sapiens (Human).